The primary structure comprises 345 residues: Neurotrimin (345 aa).

The first 30 residues, 1–30 (MGVCGSLFLPWKCLVVVSLRLLFLVPTGVP), serve as a signal peptide directing secretion. Ig-like C2-type domains lie at 39–126 (PKAM…PKTS), 136–218 (PKIV…VKVT), and 222–309 (PPYI…ASIT). N-linked (GlcNAc...) asparagine glycans are attached at residues asparagine 44, asparagine 70, and asparagine 152. A disulfide bridge links cysteine 57 with cysteine 115. 2 disulfide bridges follow: cysteine 157–cysteine 201 and cysteine 243–cysteine 295. 4 N-linked (GlcNAc...) asparagine glycosylation sites follow: asparagine 284, asparagine 292, asparagine 305, and asparagine 321. A lipid anchor (GPI-anchor amidated asparagine) is attached at asparagine 321. Positions 322-345 (GTSSRRAGCLWLLPLLVLHLLLKF) are cleaved as a propeptide — removed in mature form.

This sequence belongs to the immunoglobulin superfamily. IgLON family.

It localises to the cell membrane. In terms of biological role, neural cell adhesion molecule. The sequence is that of Neurotrimin (NTM) from Bos taurus (Bovine).